The chain runs to 92 residues: Small ribosomal subunit protein uS19c (92 aa).

It belongs to the universal ribosomal protein uS19 family.

The protein resides in the plastid. The protein localises to the chloroplast. Protein S19 forms a complex with S13 that binds strongly to the 16S ribosomal RNA. In Panax ginseng (Korean ginseng), this protein is Small ribosomal subunit protein uS19c.